Reading from the N-terminus, the 420-residue chain is O-methyltransferase penK (420 aa).

Aspartate 285 is an S-adenosyl-L-methionine binding site. The active-site Proton acceptor is the histidine 325.

The protein belongs to the class I-like SAM-binding methyltransferase superfamily. Cation-independent O-methyltransferase family.

The protein operates within secondary metabolite biosynthesis. Its pathway is alkaloid biosynthesis. It functions in the pathway mycotoxin biosynthesis. Functionally, O-methyltransferase; part of the gene cluster that mediates the biosynthesis of penigequinolones, potent insecticidal alkaloids that contain a highly modified 10-carbon prenyl group. The first stage is catalyzed by the nonribosomal peptide synthetase penN that condenses anthranilic acid and O-methyl-L-tyrosine to produce 4'-methoxycyclopeptin. 4'-methoxycyclopeptin is then converted to 4'-methoxydehydrocyclopeptin by the ketoglutarate-dependent dioxygenase penM through dehydrogenation to form a double bond between C-alpha and C-beta of the O-methyltyrosine side chain. PenM also converts its first product methoxydehydrocyclopeptin to 4'-methoxycyclopenin. The following conversion of 4'methoxycyclopenin into 4'-methoxyviridicatin is catalyzed by the cyclopenase penL. 4'-methoxyviridicatin is the precursor of quinolone natural products, and is further converted to quinolinone B. The prenyltransferase penI then catalyzes the canonical Friedel-Crafts alkylation of quinolinone B with dimethylallyl cation to yield dimethylallyl quinolone, which is subjected to FAD-dependent dehydrogenation by the FAD-linked oxidoreductase penH to yield conjugated aryl diene. The delta(3') double bond then serves as the site of the second alkylation with DMAPP catalyzed by the prenyltransferase penG to yield a carbenium ion intermediate, which can be attacked by H(2)O to yield a styrenyl quinolone containing a C3'-hydroxyprenyl chain, or undergo cyclization to yield yaequinolones J1 and J2. The conversion of the styrenyl quinolone into the tetrahydrofuran-containing yaequinolone C is performed by the FAD-dependent monooxygenase penE and involves epoxidation of the terminal C7'-C8' olefin, followed by epoxide ring opening initiated by the C3' hydroxyl group. The predicted cysteine hydrolase penJ acts as an epoxide hydrolase that enhances the rate of the 5-exo-tet cyclization step, increasing the yield of yaequinolone C. PenF catalyzes the cationic rearrangement of the epoxide formed by penE (before ring opening to produce yaequinolone C) into yaequinolone D. Finally, the short-chain dehydrogenase/reductase (SDR)-like reductase penD, catalyzes both the dehydration of yaequinolone D and the reduction of the resulting oxonium to yield penigequinolone. The chain is O-methyltransferase penK from Penicillium thymicola.